The sequence spans 704 residues: Myb-related protein B (704 aa).

3 consecutive HTH myb-type domains span residues 26–77 (RDNR…LRVL), 78–133 (NPDL…NPEV), and 134–184 (KKSC…KRKV). A DNA-binding region (H-T-H motif) is located at residues 54–77 (WKFLASHFPNRTDQQCQYRWLRVL). K104 participates in a covalent cross-link: Glycyl lysine isopeptide (Lys-Gly) (interchain with G-Cter in SUMO2). DNA-binding regions (H-T-H motif) lie at residues 106–129 (WTLI…HNHL) and 157–180 (WAEI…NSTI). K197 participates in a covalent cross-link: Glycyl lysine isopeptide (Lys-Gly) (interchain with G-Cter in SUMO2). T267 carries the phosphothreonine modification. A Glycyl lysine isopeptide (Lys-Gly) (interchain with G-Cter in SUMO2) cross-link involves residue K275. At S282 the chain carries Phosphoserine. Residues 325–412 (LSKFDLPEEP…GSGIGTPPSV (88 aa)) form a disordered region. The span at 339 to 366 (SVVSSPVQPQTSQQQQEEALQSSQQAAT) shows a compositional bias: low complexity. Position 396 is a phosphoserine (S396). K414 is covalently cross-linked (Glycyl lysine isopeptide (Lys-Gly) (interchain with G-Cter in SUMO2)). Phosphothreonine; by CDK2 occurs at positions 443 and 447. Residues K450 and K485 each participate in a glycyl lysine isopeptide (Lys-Gly) (interchain with G-Cter in SUMO2) cross-link. Phosphothreonine; by CDK2 occurs at positions 490 and 497. Glycyl lysine isopeptide (Lys-Gly) (interchain with G-Cter in SUMO2) cross-links involve residues K502 and K513. T524 is subject to Phosphothreonine; by CDK2. Residues K527, K537, and K550 each participate in a glycyl lysine isopeptide (Lys-Gly) (interchain with G-Cter in SUMO2) cross-link. At S581 the chain carries Phosphoserine; by CDK2. Residues K588 and K600 each participate in a glycyl lysine isopeptide (Lys-Gly) (interchain with G-Cter in SUMO2) cross-link. Residues 603–626 (SSTMPKPLSLPTSVTPSSCGFTSP) are disordered. The span at 607–620 (PKPLSLPTSVTPSS) shows a compositional bias: low complexity. Residues K629, K643, and K652 each participate in a glycyl lysine isopeptide (Lys-Gly) (interchain with G-Cter in SUMO2) cross-link.

As to quaternary structure, component of the DREAM complex (also named LINC complex) at least composed of E2F4, E2F5, LIN9, LIN37, LIN52, LIN54, MYBL1, MYBL2, RBL1, RBL2, RBBP4, TFDP1 and TFDP2. The complex exists in quiescent cells where it represses cell cycle-dependent genes. It dissociates in S phase when LIN9, LIN37, LIN52 and LIN54 form a subcomplex that binds to MYBL2. Interacts with CCNF (via the Cyclin N-terminal domain). Post-translationally, phosphorylated by cyclin A/CDK2 during S-phase. Phosphorylation at Thr-524 is probably involved in transcriptional activity.

Its subcellular location is the nucleus. In terms of biological role, transcription factor involved in the regulation of cell survival, proliferation, and differentiation. Transactivates the expression of the CLU gene. This Mus musculus (Mouse) protein is Myb-related protein B (Mybl2).